Reading from the N-terminus, the 52-residue chain is Large ribosomal subunit protein bL33 (52 aa).

The protein belongs to the bacterial ribosomal protein bL33 family.

This is Large ribosomal subunit protein bL33 from Helicobacter pylori (strain HPAG1).